The sequence spans 253 residues: uncharacterized protein (253 aa).

This is an uncharacterized protein from Escherichia coli O6:H1 (strain CFT073 / ATCC 700928 / UPEC).